The chain runs to 72 residues: Small ribosomal subunit protein bS18 (72 aa).

The protein belongs to the bacterial ribosomal protein bS18 family. In terms of assembly, part of the 30S ribosomal subunit. Forms a tight heterodimer with protein bS6.

Its function is as follows. Binds as a heterodimer with protein bS6 to the central domain of the 16S rRNA, where it helps stabilize the platform of the 30S subunit. This is Small ribosomal subunit protein bS18 from Fusobacterium nucleatum subsp. nucleatum (strain ATCC 25586 / DSM 15643 / BCRC 10681 / CIP 101130 / JCM 8532 / KCTC 2640 / LMG 13131 / VPI 4355).